Consider the following 934-residue polypeptide: Progesterone receptor (934 aa).

The segment at Met1–Ser49 is disordered. The tract at residues Met1 to Leu164 is AF3; mediates transcriptional activation. The modulating, Pro-Rich stretch occupies residues Met1 to Ile567. Ser20 is subject to Phosphoserine. Residues Leu55–Leu59 carry the LXXL motif 1 motif. Residues Pro61 to Gly239 form a disordered region. Ser81 is modified (phosphoserine). An LXXL motif 2 motif is present at residues Leu115–Leu119. 2 positions are modified to phosphoserine: Ser130 and Ser162. Residues Met165 to His305 are mediates transcriptional transrepression. Positions Lys183 to Arg187 match the Nuclear localization signal motif. Phosphoserine is present on Ser190. Over residues Pro191–Pro203 the composition is skewed to polar residues. Ser213 carries the phosphoserine modification. Residues Glu220–Asp231 are compositionally biased toward acidic residues. The residue at position 294 (Ser294) is a Phosphoserine; by MAPK1. A disordered region spans residues Gly331–Pro375. Positions Ala335–Ser350 are enriched in low complexity. Position 345 is a phosphoserine; by MAPK (Ser345). A Glycyl lysine isopeptide (Lys-Gly) (interchain with G-Cter in SUMO); alternate cross-link involves residue Lys388. Lys388 participates in a covalent cross-link: Glycyl lysine isopeptide (Lys-Gly) (interchain with G-Cter in ubiquitin); alternate. The residue at position 400 (Ser400) is a Phosphoserine; by CDK2. Residues Pro415–Pro454 are disordered. Residues Pro418–Arg433 are compositionally biased toward pro residues. Residues Pro434 to Pro454 are compositionally biased toward low complexity. The AF1; mediates transcriptional activation stretch occupies residues Ser456 to Arg547. Lys532 is covalently cross-linked (Glycyl lysine isopeptide (Lys-Gly) (interchain with G-Cter in SUMO)). 2 consecutive NR C4-type zinc fingers follow at residues Cys568–Cys588 and Cys604–Cys628. Positions Cys568–Phe640 form a DNA-binding region, nuclear receptor. Ser677 bears the Phosphoserine mark. The NR LBD domain maps to Gln680–Ile914. Positions Leu688–Lys934 are AF2; mediates transcriptional activation. Residue Arg767 participates in progesterone binding.

It belongs to the nuclear hormone receptor family. Interacts with SMARD1 and UNC45A. Interacts with CUEDC2; the interaction promotes ubiquitination, decreases sumoylation, and represses transcriptional activity. Interacts with PIAS3; the interaction promotes sumoylation of PR in a hormone-dependent manner, inhibits DNA-binding, and alters nuclear export. Interacts with SP1; the interaction requires ligand-induced phosphorylation on Ser-345 by ERK1/2-MAPK. Interacts with PRMT2. Interacts with NCOA2 and NCOA1. Interacts with KLF9. Interacts with GTF2B. Post-translationally, phosphorylated on multiple serine sites. Several of these sites are hormone-dependent. Phosphorylation on Ser-294 is highly hormone-dependent and modulates ubiquitination and sumoylation on Lys-388. Phosphorylation on Ser-345 also requires induction by hormone. Basal phosphorylation on Ser-81, Ser-162, Ser-190 and Ser-400 is increased in response to progesterone and can be phosphorylated in vitro by the CDK2-A1 complex. Increased levels of phosphorylation on Ser-400 also in the presence of EGF, heregulin, IGF, PMA and FBS. Phosphorylation at this site by CDK2 is ligand-independent, and increases nuclear translocation and transcriptional activity. Phosphorylation at Ser-162 and Ser-294, but not at Ser-190, is impaired during the G(2)/M phase of the cell cycle. Phosphorylation on Ser-345 by ERK1/2 MAPK is required for interaction with SP1. In terms of processing, sumoylation is hormone-dependent and represses transcriptional activity. Sumoylation on all three sites is enhanced by PIAS3. Desumoylated by SENP1. Sumoylation on Lys-388, the main site of sumoylation, is repressed by ubiquitination on the same site, and modulated by phosphorylation at Ser-294. Ubiquitination is hormone-dependent and represses sumoylation on the same site. Promoted by MAPK-mediated phosphorylation on Ser-294. Ubiquitinated by UBR5, leading to its degradation: UBR5 specifically recognizes and binds ligand-bound PGR when it is not associated with coactivators (NCOAs). In presence of NCOAs, the UBR5-degron is not accessible, preventing its ubiquitination and degradation. Post-translationally, palmitoylated by ZDHHC7 and ZDHHC21. Palmitoylation is required for plasma membrane targeting and for rapid intracellular signaling via ERK and AKT kinases and cAMP generation.

It localises to the nucleus. Its subcellular location is the cytoplasm. Functionally, the steroid hormones and their receptors are involved in the regulation of eukaryotic gene expression and affect cellular proliferation and differentiation in target tissues. Transcriptional activator of several progesteron-dependent promoters in a variety of cell types. Involved in activation of SRC-dependent MAPK signaling on hormone stimulation. The sequence is that of Progesterone receptor (PGR) from Colobus guereza (Mantled guereza).